The following is a 430-amino-acid chain: Centrosomal protein CEP57L1 (430 aa).

S45 is subject to Phosphoserine. Positions 46–213 (PNNQALVSAL…HQRRLFQDRA (168 aa)) form a coiled coil. Disordered regions lie at residues 248–290 (CLKR…GEPF) and 362–430 (RKLQ…KWEQ). Basic and acidic residues-rich tracts occupy residues 249–272 (LKRE…ERPP), 362–372 (RKLQEKVENSR), and 421–430 (LRRDDVKWEQ). A coiled-coil region spans residues 290–377 (FSICDNLSEL…VENSRINESS (88 aa)).

This sequence belongs to the translokin family.

It is found in the cytoplasm. Its subcellular location is the cytoskeleton. It localises to the microtubule organizing center. The protein resides in the centrosome. In terms of biological role, centrosomal protein which may be required for microtubule attachment to centrosomes. This Rattus norvegicus (Rat) protein is Centrosomal protein CEP57L1 (Cep57l1).